We begin with the raw amino-acid sequence, 386 residues long: Oxytocin receptor (386 aa).

A disordered region spans residues 1 to 31; the sequence is MEGVLAANWSAEAVNSSAAPPEAEGNRTAGP. The Extracellular portion of the chain corresponds to 1–38; the sequence is MEGVLAANWSAEAVNSSAAPPEAEGNRTAGPPQRNEAL. N8, N15, and N26 each carry an N-linked (GlcNAc...) asparagine glycan. A helical membrane pass occupies residues 39–63; it reads ARVEVAVLCLILFLALSGNACVLLA. Residues 64-74 lie on the Cytoplasmic side of the membrane; that stretch reads LRTTRHKHSRL. Residues 75–97 form a helical membrane-spanning segment; the sequence is FFFMKHLSIADLVVAVFQVLPQL. The Extracellular segment spans residues 98–113; sequence LWDITFRFYGPDLLCR. A disulfide bridge connects residues C112 and C187. The chain crosses the membrane as a helical span at residues 114 to 135; the sequence is LVKYLQVVGMFASTYLLLLMSL. Over 136 to 154 the chain is Cytoplasmic; it reads DRCLAICQPLRALRRPADR. The helical transmembrane segment at 155 to 175 threads the bilayer; it reads LAVLATWLGCLVASAPQVHIF. Over 176-202 the chain is Extracellular; it reads SLREVADGVFDCWAVFIQPWGPKAYIT. A helical transmembrane segment spans residues 203–225; it reads WITLAVYIVPVIVLAACYGLISF. The Cytoplasmic segment spans residues 226–277; that stretch reads KIWQNLRLKTAAEAAEAIAGTEGAAAGSRGRAALARVSSVKLISKAKIRTVK. A helical membrane pass occupies residues 278-296; it reads MTFIIVLAFIVCWTPFFFV. Topologically, residues 297-311 are extracellular; the sequence is QMWSVWDADAPKEAS. A helical transmembrane segment spans residues 312–334; sequence AFIIAMLLASLNSCCNPWIYMLF. The Cytoplasmic portion of the chain corresponds to 335 to 386; it reads TGHLFHELVQRFLCCSSSHLKTSRPGETSVSKKSNSSTFVLSQHSSSQKSCS. Over residues 355–375 the composition is skewed to polar residues; sequence KTSRPGETSVSKKSNSSTFVL. The disordered stretch occupies residues 355 to 386; that stretch reads KTSRPGETSVSKKSNSSTFVLSQHSSSQKSCS. A phosphoserine mark is found at S368 and S370. Positions 376-386 are enriched in low complexity; sequence SQHSSSQKSCS.

This sequence belongs to the G-protein coupled receptor 1 family. Vasopressin/oxytocin receptor subfamily.

It is found in the cell membrane. Its function is as follows. Receptor for oxytocin. The activity of this receptor is mediated by G proteins which activate a phosphatidylinositol-calcium second messenger system. This Sus scrofa (Pig) protein is Oxytocin receptor (OXTR).